Here is a 125-residue protein sequence, read N- to C-terminus: Fluoride-specific ion channel FluC (125 aa).

Transmembrane regions (helical) follow at residues 1–21 (MIQA…RYYV), 32–52 (AFPW…GVFA), 68–88 (LLIT…LDAI), and 101–121 (IYIA…LAVM). Positions 75 and 78 each coordinate Na(+).

This sequence belongs to the fluoride channel Fluc/FEX (TC 1.A.43) family.

It is found in the cell inner membrane. The catalysed reaction is fluoride(in) = fluoride(out). With respect to regulation, na(+) is not transported, but it plays an essential structural role and its presence is essential for fluoride channel function. Fluoride-specific ion channel. Important for reducing fluoride concentration in the cell, thus reducing its toxicity. In Rhizobium johnstonii (strain DSM 114642 / LMG 32736 / 3841) (Rhizobium leguminosarum bv. viciae), this protein is Fluoride-specific ion channel FluC.